Reading from the N-terminus, the 696-residue chain is HIPL2 protein (696 aa).

The first 24 residues, M1 to S24, serve as a signal peptide directing secretion. N-linked (GlcNAc...) asparagine glycosylation is found at N38, N69, N74, N108, N124, N148, N175, N339, N431, N513, N519, N528, N581, and N651. S672 is lipidated: GPI-anchor amidated serine. Positions S673–D696 are cleaved as a propeptide — removed in mature form.

It belongs to the PQQ oxidoreductase GdhB family. It depends on pyrroloquinoline quinone as a cofactor.

It is found in the cell membrane. This Arabidopsis thaliana (Mouse-ear cress) protein is HIPL2 protein (HIPL2).